A 393-amino-acid chain; its full sequence is NAD(P)H-quinone oxidoreductase subunit H, chloroplastic (393 aa).

This sequence belongs to the complex I 49 kDa subunit family. In terms of assembly, NDH is composed of at least 16 different subunits, 5 of which are encoded in the nucleus.

The protein resides in the plastid. Its subcellular location is the chloroplast thylakoid membrane. The catalysed reaction is a plastoquinone + NADH + (n+1) H(+)(in) = a plastoquinol + NAD(+) + n H(+)(out). It catalyses the reaction a plastoquinone + NADPH + (n+1) H(+)(in) = a plastoquinol + NADP(+) + n H(+)(out). Its function is as follows. NDH shuttles electrons from NAD(P)H:plastoquinone, via FMN and iron-sulfur (Fe-S) centers, to quinones in the photosynthetic chain and possibly in a chloroplast respiratory chain. The immediate electron acceptor for the enzyme in this species is believed to be plastoquinone. Couples the redox reaction to proton translocation, and thus conserves the redox energy in a proton gradient. The protein is NAD(P)H-quinone oxidoreductase subunit H, chloroplastic of Eucalyptus globulus subsp. globulus (Tasmanian blue gum).